We begin with the raw amino-acid sequence, 426 residues long: Glutamate-1-semialdehyde 2,1-aminomutase (426 aa).

Position 265 is an N6-(pyridoxal phosphate)lysine (Lys-265).

The protein belongs to the class-III pyridoxal-phosphate-dependent aminotransferase family. HemL subfamily. As to quaternary structure, homodimer. Pyridoxal 5'-phosphate serves as cofactor.

The protein resides in the cytoplasm. It catalyses the reaction (S)-4-amino-5-oxopentanoate = 5-aminolevulinate. It participates in porphyrin-containing compound metabolism; protoporphyrin-IX biosynthesis; 5-aminolevulinate from L-glutamyl-tRNA(Glu): step 2/2. The protein is Glutamate-1-semialdehyde 2,1-aminomutase of Salmonella agona (strain SL483).